The sequence spans 259 residues: Taurine import ATP-binding protein TauB (259 aa).

Residues 4-233 (LELERISAQY…RYAAGESARA (230 aa)) enclose the ABC transporter domain. 38-45 (GPSGSGKT) is an ATP binding site.

This sequence belongs to the ABC transporter superfamily. Taurine importer (TC 3.A.1.17.1) family. As to quaternary structure, the complex is composed of two ATP-binding proteins (TauB), two transmembrane proteins (TauC) and a solute-binding protein (TauA).

The protein localises to the cell inner membrane. The enzyme catalyses taurine(out) + ATP + H2O = taurine(in) + ADP + phosphate + H(+). Part of the ABC transporter complex TauABC involved in taurine import. Responsible for energy coupling to the transport system. The polypeptide is Taurine import ATP-binding protein TauB (Pseudomonas entomophila (strain L48)).